The primary structure comprises 650 residues: Probable protein phosphatase 2C 36 (650 aa).

Positions 146–166 are disordered; sequence SGKKTKEKAKLKKSGSKSFTK. Residues 148 to 166 show a composition bias toward basic residues; it reads KKTKEKAKLKKSGSKSFTK. A PPM-type phosphatase domain is found at 239-641; it reads ESALEEPKIQ…DDVSVIVISL (403 aa). 4 residues coordinate Mn(2+): D276, G277, D569, and D632.

Belongs to the PP2C family. Mg(2+) serves as cofactor. It depends on Mn(2+) as a cofactor.

Its subcellular location is the nucleus. It catalyses the reaction O-phospho-L-seryl-[protein] + H2O = L-seryl-[protein] + phosphate. It carries out the reaction O-phospho-L-threonyl-[protein] + H2O = L-threonyl-[protein] + phosphate. The polypeptide is Probable protein phosphatase 2C 36 (PLL3) (Arabidopsis thaliana (Mouse-ear cress)).